Reading from the N-terminus, the 497-residue chain is Serine hydroxymethyltransferase, mitochondrial (497 aa).

Residues 1-27 (MFIRRLHTSSRRLTCGEALRACQQTGA) constitute a mitochondrion transit peptide. Lys-272 carries the N6-(pyridoxal phosphate)lysine modification.

It belongs to the SHMT family. Homotetramer. Pyridoxal 5'-phosphate serves as cofactor.

Its subcellular location is the mitochondrion. The catalysed reaction is (6R)-5,10-methylene-5,6,7,8-tetrahydrofolate + glycine + H2O = (6S)-5,6,7,8-tetrahydrofolate + L-serine. Its pathway is one-carbon metabolism; tetrahydrofolate interconversion. Interconversion of serine and glycine. The polypeptide is Serine hydroxymethyltransferase, mitochondrial (SHM1) (Eremothecium gossypii (strain ATCC 10895 / CBS 109.51 / FGSC 9923 / NRRL Y-1056) (Yeast)).